A 299-amino-acid polypeptide reads, in one-letter code: Ribosomal protein L11 methyltransferase (299 aa).

Residues T140, G161, D183, and N232 each coordinate S-adenosyl-L-methionine.

Belongs to the methyltransferase superfamily. PrmA family.

Its subcellular location is the cytoplasm. It carries out the reaction L-lysyl-[protein] + 3 S-adenosyl-L-methionine = N(6),N(6),N(6)-trimethyl-L-lysyl-[protein] + 3 S-adenosyl-L-homocysteine + 3 H(+). In terms of biological role, methylates ribosomal protein L11. This Synechococcus elongatus (strain ATCC 33912 / PCC 7942 / FACHB-805) (Anacystis nidulans R2) protein is Ribosomal protein L11 methyltransferase.